Consider the following 213-residue polypeptide: BAG family molecular chaperone regulator 6, mitochondrial (213 aa).

Residues 53 to 82 (DDAAAARIQAAFRGHLVRRHAAAVRGADDE) form the IQ domain. Residues 75 to 152 (AVRGADDEAT…GLQEVFDAVL (78 aa)) enclose the BAG domain.

Interacts with CAM1-1 under normal conditions. Dissociation of the interaction when calcium-CAM1-1 binding increases under saline-alkaline stress.

Its subcellular location is the mitochondrion. Functionally, co-chaperone that regulates stress responses. Acts as a negative regulator of saline-alkaline stress tolerance. May participate in stress response through regulating the homeostasis of iron, manganese and zinc ions. The sequence is that of BAG family molecular chaperone regulator 6, mitochondrial from Oryza sativa subsp. japonica (Rice).